Here is a 449-residue protein sequence, read N- to C-terminus: Bifunctional protein GlmU (449 aa).

Positions 1-228 (MSTALVILAA…EAETLGINSR (228 aa)) are pyrophosphorylase. UDP-N-acetyl-alpha-D-glucosamine is bound by residues 8–11 (LAAG), Lys-22, Gln-75, 80–81 (GT), 103–105 (YGD), Gly-140, Glu-154, Asn-169, and Asn-226. Asp-105 lines the Mg(2+) pocket. Asn-226 provides a ligand contact to Mg(2+). Residues 229–249 (ADLAAAEAVFQAHARAELLDI) are linker. An N-acetyltransferase region spans residues 250–449 (GVTLTAPETV…RAKKAAKAKG (200 aa)). Residues Arg-315 and Lys-333 each contribute to the UDP-N-acetyl-alpha-D-glucosamine site. The active-site Proton acceptor is the His-345. UDP-N-acetyl-alpha-D-glucosamine contacts are provided by Tyr-348 and Asn-359. Acetyl-CoA-binding positions include Ala-362, 368–369 (NY), Ser-387, Thr-405, and Arg-422.

This sequence in the N-terminal section; belongs to the N-acetylglucosamine-1-phosphate uridyltransferase family. It in the C-terminal section; belongs to the transferase hexapeptide repeat family. In terms of assembly, homotrimer. The cofactor is Mg(2+).

The protein resides in the cytoplasm. It catalyses the reaction alpha-D-glucosamine 1-phosphate + acetyl-CoA = N-acetyl-alpha-D-glucosamine 1-phosphate + CoA + H(+). The enzyme catalyses N-acetyl-alpha-D-glucosamine 1-phosphate + UTP + H(+) = UDP-N-acetyl-alpha-D-glucosamine + diphosphate. It functions in the pathway nucleotide-sugar biosynthesis; UDP-N-acetyl-alpha-D-glucosamine biosynthesis; N-acetyl-alpha-D-glucosamine 1-phosphate from alpha-D-glucosamine 6-phosphate (route II): step 2/2. It participates in nucleotide-sugar biosynthesis; UDP-N-acetyl-alpha-D-glucosamine biosynthesis; UDP-N-acetyl-alpha-D-glucosamine from N-acetyl-alpha-D-glucosamine 1-phosphate: step 1/1. The protein operates within bacterial outer membrane biogenesis; LPS lipid A biosynthesis. Its function is as follows. Catalyzes the last two sequential reactions in the de novo biosynthetic pathway for UDP-N-acetylglucosamine (UDP-GlcNAc). The C-terminal domain catalyzes the transfer of acetyl group from acetyl coenzyme A to glucosamine-1-phosphate (GlcN-1-P) to produce N-acetylglucosamine-1-phosphate (GlcNAc-1-P), which is converted into UDP-GlcNAc by the transfer of uridine 5-monophosphate (from uridine 5-triphosphate), a reaction catalyzed by the N-terminal domain. This Ruegeria sp. (strain TM1040) (Silicibacter sp.) protein is Bifunctional protein GlmU.